We begin with the raw amino-acid sequence, 447 residues long: Probable glycine dehydrogenase (decarboxylating) subunit 1 (447 aa).

The protein belongs to the GcvP family. N-terminal subunit subfamily. The glycine cleavage system is composed of four proteins: P, T, L and H. In this organism, the P 'protein' is a heterodimer of two subunits.

It catalyses the reaction N(6)-[(R)-lipoyl]-L-lysyl-[glycine-cleavage complex H protein] + glycine + H(+) = N(6)-[(R)-S(8)-aminomethyldihydrolipoyl]-L-lysyl-[glycine-cleavage complex H protein] + CO2. The glycine cleavage system catalyzes the degradation of glycine. The P protein binds the alpha-amino group of glycine through its pyridoxal phosphate cofactor; CO(2) is released and the remaining methylamine moiety is then transferred to the lipoamide cofactor of the H protein. This Bacillus mycoides (strain KBAB4) (Bacillus weihenstephanensis) protein is Probable glycine dehydrogenase (decarboxylating) subunit 1.